A 621-amino-acid chain; its full sequence is Chaperone protein HscA homolog (621 aa).

The protein belongs to the heat shock protein 70 family.

Chaperone involved in the maturation of iron-sulfur cluster-containing proteins. Has a low intrinsic ATPase activity which is markedly stimulated by HscB. This Cupriavidus metallidurans (strain ATCC 43123 / DSM 2839 / NBRC 102507 / CH34) (Ralstonia metallidurans) protein is Chaperone protein HscA homolog.